A 95-amino-acid chain; its full sequence is MTSPVNVDVKLGVNKFNVDEEHPHIVVKADADKQALELLVKACPAGLYKKQDDGSVRFDYAGCLECGTCRILGLGSALEQWEYPRGTFGVEFRYG.

Belongs to the bacterial-type ferredoxin family. FixX subfamily.

Functionally, could be part of an electron transfer system required for anaerobic carnitine reduction. Could be a 3Fe-4S cluster-containing protein. The polypeptide is Ferredoxin-like protein FixX (fixX) (Escherichia coli O157:H7).